A 192-amino-acid chain; its full sequence is NADH-quinone oxidoreductase subunit B 1 (192 aa).

The [4Fe-4S] cluster site is built by C71, C72, C136, and C166.

This sequence belongs to the complex I 20 kDa subunit family. In terms of assembly, NDH-1 is composed of 14 different subunits. Subunits NuoB, C, D, E, F, and G constitute the peripheral sector of the complex. The cofactor is [4Fe-4S] cluster.

It is found in the cell inner membrane. It catalyses the reaction a quinone + NADH + 5 H(+)(in) = a quinol + NAD(+) + 4 H(+)(out). In terms of biological role, NDH-1 shuttles electrons from NADH, via FMN and iron-sulfur (Fe-S) centers, to quinones in the respiratory chain. The immediate electron acceptor for the enzyme in this species is believed to be ubiquinone. Couples the redox reaction to proton translocation (for every two electrons transferred, four hydrogen ions are translocated across the cytoplasmic membrane), and thus conserves the redox energy in a proton gradient. The chain is NADH-quinone oxidoreductase subunit B 1 from Rhizobium meliloti (strain 1021) (Ensifer meliloti).